Here is a 754-residue protein sequence, read N- to C-terminus: Probable beta-glucosidase D (754 aa).

The first 20 residues, 1 to 20, serve as a signal peptide directing secretion; the sequence is MKVLSFIVAAALLGLTGASS. N-linked (GlcNAc...) asparagine glycosylation is found at Asn-66, Asn-69, and Asn-186. A disordered region spans residues 186–206; that stretch reads NRTGGGGGGGGDSGSAPYSSN. A compositionally biased stretch (gly residues) spans 188–198; it reads TGGGGGGGGDS. An N-linked (GlcNAc...) asparagine glycan is attached at Asn-239. Asp-267 is a catalytic residue. Residues Asn-301, Asn-345, Asn-443, Asn-512, Asn-534, Asn-573, Asn-588, Asn-655, and Asn-745 are each glycosylated (N-linked (GlcNAc...) asparagine).

It belongs to the glycosyl hydrolase 3 family.

Its subcellular location is the secreted. It carries out the reaction Hydrolysis of terminal, non-reducing beta-D-glucosyl residues with release of beta-D-glucose.. The protein operates within glycan metabolism; cellulose degradation. Functionally, beta-glucosidases are one of a number of cellulolytic enzymes involved in the degradation of cellulosic biomass. Catalyzes the last step releasing glucose from the inhibitory cellobiose. This chain is Probable beta-glucosidase D (bglD), found in Aspergillus niger (strain ATCC MYA-4892 / CBS 513.88 / FGSC A1513).